The chain runs to 305 residues: MGKPDLSVEVAGIKLRNPVMTASGTFGYGKEFADYLDLEKIGAIITKGLSIRPKAGNPTPRIVETPGGMLNAIGLQNVGIDAFIQEKLPFLRTVNTPVIVNLYGNTLEEYGELAEKLDKLPEVAGLEVNISCPNVKQGGIVFGTDPNAAYEVVSLVRESTIKPLIVKLSPNVTNVVEMANACVDAGADALSLINTLTGMAIDLQKRRPILANMTGGLSGPAIKPVALRMVWQVAQAVKVPVIGIGGIMTATDALEFMLAGATAVQVGTANFLDPSAAQTIAEGMETYLEENGIADVKELIGALIT.

FMN is bound by residues Ser23 and 47–48 (KG). Residues Lys47 and 71–75 (NAIGL) contribute to the substrate site. FMN contacts are provided by Asn101 and Asn129. Asn129 contacts substrate. Cys132 functions as the Nucleophile in the catalytic mechanism. Lys167 and Ile193 together coordinate FMN. 194-195 (NT) provides a ligand contact to substrate. Residues Gly219, 245–246 (GG), and 267–268 (GT) contribute to the FMN site.

It belongs to the dihydroorotate dehydrogenase family. Type 1 subfamily. As to quaternary structure, heterotetramer of 2 PyrK and 2 PyrD type B subunits. Requires FMN as cofactor.

The protein localises to the cytoplasm. It carries out the reaction (S)-dihydroorotate + NAD(+) = orotate + NADH + H(+). Its pathway is pyrimidine metabolism; UMP biosynthesis via de novo pathway; orotate from (S)-dihydroorotate (NAD(+) route): step 1/1. Functionally, catalyzes the conversion of dihydroorotate to orotate with NAD(+) as electron acceptor. This chain is Dihydroorotate dehydrogenase B (NAD(+)), catalytic subunit (pyrD), found in Geotalea uraniireducens (strain Rf4) (Geobacter uraniireducens).